The following is an 886-amino-acid chain: Protein O-mannosyltransferase 1 (886 aa).

2 stretches are compositionally biased toward polar residues: residues 1-10 (MSATYTNTIT) and 18-34 (VRQQ…LSGE). Disordered stretches follow at residues 1–37 (MSAT…ESNE) and 88–161 (RGSV…KTAN). The span at 105 to 139 (PTPVATPKQASPSPTSDRSRSLSRSPSPSRSRSLS) shows a compositional bias: low complexity. N-linked (GlcNAc...) asparagine glycans are attached at residues Asn161 and Asn242. 4 helical membrane-spanning segments follow: residues 256 to 276 (MPIF…APAV), 310 to 330 (VLME…LLRF), 349 to 369 (VCLG…GLAF), and 398 to 418 (LLIF…IHFK). MIR domains follow at residues 450 to 511 (PLAV…VKRP), 522 to 579 (PDII…VEIL), and 585 to 642 (GDIW…VEEH). 3 consecutive transmembrane segments (helical) span residues 727-747 (ILLW…LAFY), 791-811 (LFLH…CFVV), and 835-855 (LMLI…IPFS).

Belongs to the glycosyltransferase 39 family. In terms of assembly, interacts with tw/POMT2. At the cellular blastoderm stage, expression accumulates in the ventrally located mesoderm primordium. At germ band extension, mesoderm expression is seen as stripes of strong expression. A very strong signal is also detected in the invaginating gut. As the germ band retracts, mesodermal expression decays and becomes restricted to somatic muscle precursors. After dorsal closure, expression has disappeared from the mesoderm and remains in the endoderm. Some expression is detected in a few cells of the head and the pharyngeal muscles.

It is found in the endoplasmic reticulum membrane. The catalysed reaction is a di-trans,poly-cis-dolichyl beta-D-mannosyl phosphate + L-seryl-[protein] = 3-O-(alpha-D-mannosyl)-L-seryl-[protein] + a di-trans,poly-cis-dolichyl phosphate + H(+). The enzyme catalyses a di-trans,poly-cis-dolichyl beta-D-mannosyl phosphate + L-threonyl-[protein] = 3-O-(alpha-D-mannosyl)-L-threonyl-[protein] + a di-trans,poly-cis-dolichyl phosphate + H(+). Its pathway is protein modification; protein glycosylation. Rt/POMT1 and tw/POMT2 function as a protein O-mannosyltransferase in association with each other to generate and maintain normal muscle development. The polypeptide is Protein O-mannosyltransferase 1 (Drosophila melanogaster (Fruit fly)).